The primary structure comprises 140 residues: Con-Ins Im2 (140 aa).

The first 29 residues, 1 to 29 (MALTWPSSPPVLLTLLLSLLALQLCAVYG), serve as a signal peptide directing secretion. 4 cysteine pairs are disulfide-bonded: cysteine 35-cysteine 123, cysteine 50-cysteine 126, cysteine 62-cysteine 139, and cysteine 125-cysteine 130. A propeptide spans 64 to 110 (PRGYVSNWFTKRSAPNKPAETFVDQNLRGVLLNKREALSYLRPREPR) (c peptide). Glutamate 134 carries the post-translational modification 4-carboxyglutamate; partial.

It belongs to the insulin family. In terms of assembly, heterodimer of A and B chains; disulfide-linked. In terms of tissue distribution, expressed by the venom gland.

It localises to the secreted. This venom insulin facilitates prey capture by rapidly inducing hypoglycemic shock. Intraperitoneal injection of this peptide into zebrafish lowers blood glucose with the same potency than human insulin. In vivo, when applied to water, this peptide reduces overall locomotor activity of zebrafish larvae, observed as a significant decrease in the percentage of time spent swimming and movement frequency. The polypeptide is Con-Ins Im2 (Conus imperialis (Imperial cone)).